We begin with the raw amino-acid sequence, 396 residues long: MKFVDEATIYVEAGKGGNGCLSFRREKYVPKGGPDGGDGGDGGSVILEADESINTLIDYRYTRKFKAANGESGRGGNCTGASGADLVLKVPVGTTIIDTDIDEVLGDLVEVGQQIKVAQGGFHGLGNTRYKSSVNQAPRQTKPGQPGESRNIRLELKVLADVGLLGLPNAGKSTLIRGISSAKPKVADYPFTTLVPNLGVVRVQAHRSFVVADIPGLIEGAADGAGLGIRFLKHLVRTRLLLHVVDVSPLDESDPVESAVKIVAELEKFSPALAARDRWLVLNKTDLLAEDEKEAICADILKRLNWSGPSYEISALAGEGLQRLCQDIMTWIERRAEEERDDPEVAEADRLNREQMDQEVRERIQFLNEQRRLARKKAKESDDDDDDEDVEVFYAP.

An Obg domain is found at 1–159 (MKFVDEATIY…RNIRLELKVL (159 aa)). In terms of domain architecture, OBG-type G spans 160–333 (ADVGLLGLPN…LCQDIMTWIE (174 aa)). Residues 166-173 (GLPNAGKS), 191-195 (FTTLV), 213-216 (DIPG), 283-286 (NKTD), and 314-316 (SAL) contribute to the GTP site. 2 residues coordinate Mg(2+): Ser-173 and Thr-193. Disordered stretches follow at residues 337 to 356 (EEERDDPEVAEADRLNREQM) and 373 to 396 (LARKKAKESDDDDDDEDVEVFYAP). A compositionally biased stretch (basic and acidic residues) spans 347-356 (EADRLNREQM). Over residues 381–396 (SDDDDDDEDVEVFYAP) the composition is skewed to acidic residues.

The protein belongs to the TRAFAC class OBG-HflX-like GTPase superfamily. OBG GTPase family. As to quaternary structure, monomer. The cofactor is Mg(2+).

It is found in the cytoplasm. Its function is as follows. An essential GTPase which binds GTP, GDP and possibly (p)ppGpp with moderate affinity, with high nucleotide exchange rates and a fairly low GTP hydrolysis rate. Plays a role in control of the cell cycle, stress response, ribosome biogenesis and in those bacteria that undergo differentiation, in morphogenesis control. This is GTPase Obg from Hahella chejuensis (strain KCTC 2396).